A 339-amino-acid chain; its full sequence is Uroporphyrinogen decarboxylase (339 aa).

Substrate is bound by residues 21-25 (RQAGR), F40, D71, Y147, S202, and H315.

Belongs to the uroporphyrinogen decarboxylase family. In terms of assembly, homodimer.

It localises to the cytoplasm. The catalysed reaction is uroporphyrinogen III + 4 H(+) = coproporphyrinogen III + 4 CO2. The protein operates within porphyrin-containing compound metabolism; protoporphyrin-IX biosynthesis; coproporphyrinogen-III from 5-aminolevulinate: step 4/4. Functionally, catalyzes the decarboxylation of four acetate groups of uroporphyrinogen-III to yield coproporphyrinogen-III. In Helicobacter pylori (strain ATCC 700392 / 26695) (Campylobacter pylori), this protein is Uroporphyrinogen decarboxylase.